A 188-amino-acid chain; its full sequence is GTP cyclohydrolase 1 (188 aa).

3 residues coordinate Zn(2+): Cys-78, His-81, and Cys-150.

This sequence belongs to the GTP cyclohydrolase I family. As to quaternary structure, homomer.

The enzyme catalyses GTP + H2O = 7,8-dihydroneopterin 3'-triphosphate + formate + H(+). It functions in the pathway cofactor biosynthesis; 7,8-dihydroneopterin triphosphate biosynthesis; 7,8-dihydroneopterin triphosphate from GTP: step 1/1. This chain is GTP cyclohydrolase 1, found in Geobacillus sp. (strain WCH70).